The chain runs to 301 residues: Protoheme IX farnesyltransferase 1 (301 aa).

Helical transmembrane passes span 29 to 49 (VVAL…PHAV), 51 to 71 (VQPL…AAAL), 101 to 121 (ALIF…SLVN), 123 to 143 (LTAW…TAYL), 150 to 170 (NIVI…TAVT), 177 to 197 (ALLL…ALAI), 223 to 243 (CILL…LVGM), 244 to 264 (CGPV…YKAW), and 274 to 294 (LAMQ…MALL).

This sequence belongs to the UbiA prenyltransferase family. Protoheme IX farnesyltransferase subfamily.

Its subcellular location is the cell inner membrane. The catalysed reaction is heme b + (2E,6E)-farnesyl diphosphate + H2O = Fe(II)-heme o + diphosphate. It functions in the pathway porphyrin-containing compound metabolism; heme O biosynthesis; heme O from protoheme: step 1/1. In terms of biological role, converts heme B (protoheme IX) to heme O by substitution of the vinyl group on carbon 2 of heme B porphyrin ring with a hydroxyethyl farnesyl side group. This is Protoheme IX farnesyltransferase 1 from Shewanella baltica (strain OS195).